Reading from the N-terminus, the 718-residue chain is Probable protein S-acyltransferase 19 (718 aa).

2 helical membrane-spanning segments follow: residues 16-36 and 41-61; these read VVAI…FAPF and IWEY…FVLY. Residues 100–125 form a disordered region; it reads ETGSHLQSSPSVASRTSTLPNSSVKG. The segment covering 103–124 has biased composition (polar residues); that stretch reads SHLQSSPSVASRTSTLPNSSVK. Positions 174–224 constitute a DHHC domain; sequence LFCTLCNAEVRKFSKHCRSCDKCVDCFDHHCRWLNNCVGRKNYMTFISLMA. Residue Cys-204 is the S-palmitoyl cysteine intermediate of the active site. The next 2 membrane-spanning stretches (helical) occupy residues 222–242 and 277–297; these read LMAV…AVIV and AVSM…MLLI. 3 disordered regions span residues 454-511, 598-649, and 664-718; these read SSVS…HVHE, PATT…QQQQ, and GPLV…GTRK. 2 stretches are compositionally biased toward polar residues: residues 479–488 and 598–626; these read CRNSYAPSQG and PATT…TQNP. The span at 673 to 687 shows a compositional bias: basic and acidic residues; the sequence is DGLRHDGDSGREGQD.

Belongs to the DHHC palmitoyltransferase family.

The protein resides in the cell membrane. It carries out the reaction L-cysteinyl-[protein] + hexadecanoyl-CoA = S-hexadecanoyl-L-cysteinyl-[protein] + CoA. Palmitoyl acyltransferase. The sequence is that of Probable protein S-acyltransferase 19 (PAT19) from Arabidopsis thaliana (Mouse-ear cress).